The primary structure comprises 943 residues: Aconitate hydratase A (943 aa).

[4Fe-4S] cluster is bound by residues Cys479, Cys545, and Cys548.

This sequence belongs to the aconitase/IPM isomerase family. As to quaternary structure, monomer. [4Fe-4S] cluster is required as a cofactor.

It catalyses the reaction citrate = D-threo-isocitrate. The catalysed reaction is (2S,3R)-3-hydroxybutane-1,2,3-tricarboxylate = 2-methyl-cis-aconitate + H2O. It participates in carbohydrate metabolism; tricarboxylic acid cycle; isocitrate from oxaloacetate: step 2/2. It functions in the pathway organic acid metabolism; propanoate degradation. Functionally, involved in the catabolism of short chain fatty acids (SCFA) via the tricarboxylic acid (TCA)(acetyl degradation route) and probably via the 2-methylcitrate cycle I (propionate degradation route). Catalyzes the reversible isomerization of citrate to isocitrate via cis-aconitate. The apo form of AcnA functions as a RNA-binding regulatory protein which binds to selected IRE-like sequences present within the UTRs (untranslated regions) of 3' trxC and 5' IdeR mRNA. Could catalyze the hydration of 2-methyl-cis-aconitate to yield (2R,3S)-2-methylisocitrate. This Mycobacterium tuberculosis (strain ATCC 25618 / H37Rv) protein is Aconitate hydratase A (acn).